The primary structure comprises 165 residues: Ubiquitin-fold modifier-conjugating enzyme 1 (165 aa).

Cysteine 116 functions as the Glycyl thioester intermediate in the catalytic mechanism.

The protein belongs to the ubiquitin-conjugating enzyme family. UFC1 subfamily.

In terms of biological role, E2-like enzyme which forms an intermediate with UFM1 via a thioester linkage. The protein is Ubiquitin-fold modifier-conjugating enzyme 1 of Drosophila virilis (Fruit fly).